Consider the following 445-residue polypeptide: Phosphoglucosamine mutase (445 aa).

Residue Ser102 is the Phosphoserine intermediate of the active site. Ser102, Asp241, Asp243, and Asp245 together coordinate Mg(2+). Phosphoserine is present on Ser102.

This sequence belongs to the phosphohexose mutase family. The cofactor is Mg(2+). Activated by phosphorylation.

The catalysed reaction is alpha-D-glucosamine 1-phosphate = D-glucosamine 6-phosphate. In terms of biological role, catalyzes the conversion of glucosamine-6-phosphate to glucosamine-1-phosphate. This Escherichia coli O7:K1 (strain IAI39 / ExPEC) protein is Phosphoglucosamine mutase.